Consider the following 110-residue polypeptide: Large ribosomal subunit protein uL22 (110 aa).

Belongs to the universal ribosomal protein uL22 family. Part of the 50S ribosomal subunit.

In terms of biological role, this protein binds specifically to 23S rRNA; its binding is stimulated by other ribosomal proteins, e.g. L4, L17, and L20. It is important during the early stages of 50S assembly. It makes multiple contacts with different domains of the 23S rRNA in the assembled 50S subunit and ribosome. Functionally, the globular domain of the protein is located near the polypeptide exit tunnel on the outside of the subunit, while an extended beta-hairpin is found that lines the wall of the exit tunnel in the center of the 70S ribosome. This chain is Large ribosomal subunit protein uL22, found in Pseudomonas savastanoi pv. phaseolicola (strain 1448A / Race 6) (Pseudomonas syringae pv. phaseolicola (strain 1448A / Race 6)).